Reading from the N-terminus, the 476-residue chain is Cytochrome c oxidase subunit 1 (476 aa).

Residues Leu19–Leu39 traverse the membrane as a helical segment. Glu42 provides a ligand contact to Ca(2+). 8 helical membrane passes run Met61–Gly81, Ile105–Phe125, Leu144–Ile164, Ile194–Met214, Leu240–Ile260, Met278–Tyr298, Phe309–Leu329, and Leu345–Gly365. His66 provides a ligand contact to Fe(II)-heme a. His246 provides a ligand contact to Cu cation. A cross-link (1'-histidyl-3'-tyrosine (His-Tyr)) is located at residues His246–Tyr250. Tyr250 is an O2 binding site. Residues His295 and His296 each contribute to the Cu cation site. His374 and Asp375 together coordinate Mg(2+). 2 helical membrane passes run Val379–Val399 and Thr415–Met435. Heme a3 is bound at residue His382. His384 contributes to the Fe(II)-heme a binding site. Position 448 (Pro448) interacts with Ca(2+). Residues Asn455–Phe475 traverse the membrane as a helical segment.

Belongs to the heme-copper respiratory oxidase family. In terms of assembly, component of the cytochrome c oxidase (complex IV, CIV), a multisubunit enzyme composed of a catalytic core of 3 subunits and several supernumerary subunits. The complex exists as a monomer or a dimer and forms supercomplexes (SCs) in the inner mitochondrial membrane with ubiquinol-cytochrome c oxidoreductase (cytochrome b-c1 complex, complex III, CIII). Heme is required as a cofactor. The cofactor is Cu cation.

The protein resides in the mitochondrion inner membrane. It catalyses the reaction 4 Fe(II)-[cytochrome c] + O2 + 8 H(+)(in) = 4 Fe(III)-[cytochrome c] + 2 H2O + 4 H(+)(out). The protein operates within energy metabolism; oxidative phosphorylation. Its function is as follows. Component of the cytochrome c oxidase, the last enzyme in the mitochondrial electron transport chain which drives oxidative phosphorylation. The respiratory chain contains 3 multisubunit complexes succinate dehydrogenase (complex II, CII), ubiquinol-cytochrome c oxidoreductase (cytochrome b-c1 complex, complex III, CIII) and cytochrome c oxidase (complex IV, CIV), that cooperate to transfer electrons derived from NADH and succinate to molecular oxygen, creating an electrochemical gradient over the inner membrane that drives transmembrane transport and the ATP synthase. Cytochrome c oxidase is the component of the respiratory chain that catalyzes the reduction of oxygen to water. Electrons originating from reduced cytochrome c in the intermembrane space (IMS) are transferred via the dinuclear copper A center (CU(A)) of subunit 2 and heme A of subunit 1 to the active site in subunit 1, a binuclear center (BNC) formed by heme A3 and copper B (CU(B)). The BNC reduces molecular oxygen to 2 water molecules using 4 electrons from cytochrome c in the IMS and 4 protons from the mitochondrial matrix. The protein is Cytochrome c oxidase subunit 1 (COI) of Plasmodium berghei.